Consider the following 354-residue polypeptide: Aspartate carbamoyltransferase catalytic subunit (354 aa).

Carbamoyl phosphate is bound by residues R67 and T68. K95 is an L-aspartate binding site. R117, H150, and Q153 together coordinate carbamoyl phosphate. 2 residues coordinate L-aspartate: R190 and R261. Carbamoyl phosphate contacts are provided by G302 and P303.

This sequence belongs to the aspartate/ornithine carbamoyltransferase superfamily. ATCase family. Heterododecamer (2C3:3R2) of six catalytic PyrB chains organized as two trimers (C3), and six regulatory PyrI chains organized as three dimers (R2).

The catalysed reaction is carbamoyl phosphate + L-aspartate = N-carbamoyl-L-aspartate + phosphate + H(+). Its pathway is pyrimidine metabolism; UMP biosynthesis via de novo pathway; (S)-dihydroorotate from bicarbonate: step 2/3. Its function is as follows. Catalyzes the condensation of carbamoyl phosphate and aspartate to form carbamoyl aspartate and inorganic phosphate, the committed step in the de novo pyrimidine nucleotide biosynthesis pathway. This Synechococcus sp. (strain RCC307) protein is Aspartate carbamoyltransferase catalytic subunit.